Reading from the N-terminus, the 356-residue chain is UDP-N-acetylglucosamine--N-acetylmuramyl-(pentapeptide) pyrophosphoryl-undecaprenol N-acetylglucosamine transferase (356 aa).

UDP-N-acetyl-alpha-D-glucosamine contacts are provided by residues 15 to 17 (TGG), asparagine 127, arginine 163, serine 191, isoleucine 244, 263 to 268 (ALTVSE), and glutamine 288.

The protein belongs to the glycosyltransferase 28 family. MurG subfamily.

It is found in the cell inner membrane. The catalysed reaction is di-trans,octa-cis-undecaprenyl diphospho-N-acetyl-alpha-D-muramoyl-L-alanyl-D-glutamyl-meso-2,6-diaminopimeloyl-D-alanyl-D-alanine + UDP-N-acetyl-alpha-D-glucosamine = di-trans,octa-cis-undecaprenyl diphospho-[N-acetyl-alpha-D-glucosaminyl-(1-&gt;4)]-N-acetyl-alpha-D-muramoyl-L-alanyl-D-glutamyl-meso-2,6-diaminopimeloyl-D-alanyl-D-alanine + UDP + H(+). It functions in the pathway cell wall biogenesis; peptidoglycan biosynthesis. Functionally, cell wall formation. Catalyzes the transfer of a GlcNAc subunit on undecaprenyl-pyrophosphoryl-MurNAc-pentapeptide (lipid intermediate I) to form undecaprenyl-pyrophosphoryl-MurNAc-(pentapeptide)GlcNAc (lipid intermediate II). The sequence is that of UDP-N-acetylglucosamine--N-acetylmuramyl-(pentapeptide) pyrophosphoryl-undecaprenol N-acetylglucosamine transferase from Klebsiella pneumoniae subsp. pneumoniae (strain ATCC 700721 / MGH 78578).